A 663-amino-acid polypeptide reads, in one-letter code: MAU2 chromatid cohesion factor homolog (663 aa).

TPR repeat units follow at residues Gly455–Glu488 and Ser495–Ile528.

It belongs to the SCC4/mau-2 family. Interacts with Nipped-B to form the cohesin loading complex.

The protein resides in the nucleus. Its subcellular location is the nucleoplasm. In terms of biological role, required for association of the cohesin complex with chromatin during interphase. Plays a role in sister chromatid cohesion and normal progression through prometaphase. The protein is MAU2 chromatid cohesion factor homolog of Drosophila willistoni (Fruit fly).